The sequence spans 1657 residues: Ras GTPase-activating-like protein IQGAP1 (1657 aa).

Ser-2 carries the N-acetylserine modification. Phosphoserine is present on Ser-2. A Calponin-homology (CH) domain is found at 44-159; sequence LCHLEEAKRW…YCIHALSLYL (116 aa). Tyr-172 carries the post-translational modification Phosphotyrosine. Phosphoserine is present on Ser-330. The WW domain occupies 685–710; that stretch reads WVKHWVKGGYHYYHNLETQAGGWAEP. IQ domains are found at residues 745–774, 775–804, 805–834, and 835–864; these read NEGL…FLKK, QIPA…YLHS, HKDE…YFRD, and HIND…AEDP. Residues 956–1274 are C1; that stretch reads GGLKALSKEK…FFQVACDVPE (319 aa). A Ras-GAP domain is found at 1020–1269; it reads YLLLRLFQTA…QKFRRFFQVA (250 aa). The segment at 1276–1657 is C2; sequence QDKFNVDEYS…FLLNKKFYGK (382 aa). Ser-1441 carries the post-translational modification Phosphoserine.

Interacts with CDC42; the interaction is demonstrated with IQGAP1 in GTP-bound and in nucleotide-free state. Interacts with RAC1. Does not interact with RHOA. Interacts with TSG101. Interacts with PAK6. Interacts with SASH1. Interacts with PJVK. Interacts with SLC26A4. This interaction enhances the chloride-bicarbonate exchange activity of SLC26A4. Interacts with SVEP1. Interacts with ILK; the interaction is required for localization of IQGAP to the cell cortex. As to quaternary structure, (Microbial infection) In case of infection, interacts with S.typhimurium protein sseI. As to expression, expressed in the kidney (at protein level).

Its subcellular location is the cell membrane. The protein localises to the nucleus. It is found in the cytoplasm. It localises to the cell cortex. The protein resides in the apical cell membrane. Its subcellular location is the basolateral cell membrane. Its function is as follows. Plays a crucial role in regulating the dynamics and assembly of the actin cytoskeleton. Recruited to the cell cortex by interaction with ILK which allows it to cooperate with its effector DIAPH1 to locally stabilize microtubules and allow stable insertion of caveolae into the plasma membrane. Binds to activated CDC42 but does not stimulate its GTPase activity. Associates with calmodulin. May promote neurite outgrowth. May play a possible role in cell cycle regulation by contributing to cell cycle progression after DNA replication arrest. The chain is Ras GTPase-activating-like protein IQGAP1 (Iqgap1) from Mus musculus (Mouse).